A 2295-amino-acid polypeptide reads, in one-letter code: Protein DOP1B (2295 aa).

Phosphoserine occurs at positions 556 and 597. 4 disordered regions span residues 574 to 599 (AGDE…SSPE), 651 to 684 (GEEN…DPKP), 1034 to 1059 (CKEA…QFTT), and 1092 to 1136 (DLPD…LQDL). Polar residues predominate over residues 1111 to 1131 (ADTSSGHTDSENTSTFSSPSH). S1167 bears the Phosphoserine mark.

This sequence belongs to the DOP1 family. In terms of assembly, homooligomer. Heterotrimer with ATP9A and MON2; this interaction is retromer-independent. Interacts with SNX3. In terms of tissue distribution, expressed in liver, heart and brain.

The protein localises to the early endosome membrane. Its subcellular location is the golgi apparatus membrane. May play a role in regulating membrane trafficking of cargo proteins. Together with ATP9A and MON2, regulates SNX3 retromer-mediated endosomal sorting of WLS away from lysosomal degradation. In Mus musculus (Mouse), this protein is Protein DOP1B (Dop1b).